We begin with the raw amino-acid sequence, 136 residues long: ATP synthase F(0) complex subunit C1, mitochondrial (136 aa).

A mitochondrion-targeting transit peptide spans 1–61; it reads MQTTKALLIS…REFQTSVISR (61 aa). The helical transmembrane segment at 77 to 97 threads the bilayer; the sequence is VGVAGSGAGIGTVFGSLIIGY. Lysine 104 carries the post-translational modification N6,N6,N6-trimethyllysine. The chain crosses the membrane as a helical span at residues 112–132; that stretch reads ILGFALSEAMGLFCLMVAFLI.

Belongs to the ATPase C chain family. Homooctamer; the c-ring consists of eight c subunits forming a circle, and each subunit adopts a hairpin shape. Component of the ATP synthase complex composed at least of ATP5F1A/subunit alpha, ATP5F1B/subunit beta, ATP5MC1/subunit c (homooctomer), MT-ATP6/subunit a, MT-ATP8/subunit 8, ATP5ME/subunit e, ATP5MF/subunit f, ATP5MG/subunit g, ATP5MK/subunit k, ATP5MJ/subunit j, ATP5F1C/subunit gamma, ATP5F1D/subunit delta, ATP5F1E/subunit epsilon, ATP5PF/subunit F6, ATP5PB/subunit b, ATP5PD/subunit d, ATP5PO/subunit OSCP. ATP synthase complex consists of a soluble F(1) head domain (subunits alpha(3) and beta(3)) - the catalytic core - and a membrane F(0) domain - the membrane proton channel (subunits c, a, 8, e, f, g, k and j). These two domains are linked by a central stalk (subunits gamma, delta, and epsilon) rotating inside the F1 region and a stationary peripheral stalk (subunits F6, b, d, and OSCP). Interacts with TMEM70 (homooligomer form); this interaction facilitates the oligomer formation of subunit c/ATP5MC1 (c-ring) and the c-ring membrane insertion and also protects ATP5MC1 against intramitochondrial proteolysis. Trimethylated by ATPSCKMT at Lys-104. Methylation is required for proper incorporation of the C subunit into the ATP synthase complex and mitochondrial respiration.

The protein resides in the mitochondrion membrane. The enzyme catalyses H(+)(in) = H(+)(out). Its function is as follows. Subunit c, of the mitochondrial membrane ATP synthase complex (F(1)F(0) ATP synthase or Complex V) that produces ATP from ADP in the presence of a proton gradient across the membrane which is generated by electron transport complexes of the respiratory chain. ATP synthase complex consist of a soluble F(1) head domain - the catalytic core - and a membrane F(1) domain - the membrane proton channel. These two domains are linked by a central stalk rotating inside the F(1) region and a stationary peripheral stalk. During catalysis, ATP synthesis in the catalytic domain of F(1) is coupled via a rotary mechanism of the central stalk subunits to proton translocation. With the subunit a (MT-ATP6), forms the proton-conducting channel in the F(0) domain, that contains two crucial half-channels (inlet and outlet) that facilitate proton movement from the mitochondrial intermembrane space (IMS) into the matrix. Protons are taken up via the inlet half-channel and released through the outlet half-channel, following a Grotthuss mechanism. This chain is ATP synthase F(0) complex subunit C1, mitochondrial, found in Rattus norvegicus (Rat).